A 638-amino-acid polypeptide reads, in one-letter code: Probable ATP-binding protein YheS (638 aa).

2 consecutive ABC transporter domains span residues 2–246 (IIFS…AQQT) and 313–531 (VMIE…STSE). Residues 34-41 (GKNGCGKS) and 349-356 (GKNGAGKS) each bind ATP. The disordered stretch occupies residues 525–563 (EQNSTSENKVSEKVGDNENSVQNRKEQKRREAELRQQTA). Basic and acidic residues predominate over residues 547 to 558 (NRKEQKRREAEL).

This sequence belongs to the ABC transporter superfamily. ABCF family. YheS subfamily.

Its function is as follows. Genetic data indicate it may be involved in ribosome assembly or function. This chain is Probable ATP-binding protein YheS, found in Haemophilus influenzae (strain ATCC 51907 / DSM 11121 / KW20 / Rd).